Consider the following 625-residue polypeptide: MRILLIHSDYIEYEVKDKAIKNPEPISEEEKKGRMDEVLVAFISVEKVDETNPEEVVSKAVEEIINVASQVKAENVFVYPFAHLSSELAKPSVAQEILRKVYEGLKEKGYNVGKAPFGYYKAFKISCKGHPLAELSRTIIPEGAKEEEVPEALKKEETELVSYWYILTPEGELIEVDKFDFTGYENLRKFANYEISKSRIAEKEPPHVKLMLEHELVDYEPGSDPGNLRYYPKGRLIKSLLEQYVTEKVIEYGAMEVETPVMYDFEHPALEKYLNRFPARQYIVLSGDKKYFLRFAACFGQFLISKDAVISYRHLPLRMYELTRYSFRREKRGELSGLRRLRAFTMPDMHTLAKDLEQAKDEFKKQFKLSMEVLKGVGLTPEDYEVAIRFTEDFWKENRDFIVELVKIIGKPVLIEMWKQRFFYFILKFEFNFVDNLDKAAALSTVQIDVENAERFGIKYYDENGEEKYPLILHCSPSGAIERVMYAILEKQAKLMQEGKKPMLPLWLSPIQVRVIPVSEEYLDYALYIAGKLEGARIRVDVDDEDERLNKKIRRAEKEWIPYIVVVGAKEKESGTITVRRREDGKQYETRLEELIKEIKEKVEGFPYKPRPLPLLLSKRPKFRG.

The interval 1 to 143 is editing domain; that stretch reads MRILLIHSDY…ELSRTIIPEG (143 aa). The interval 206–505 is catalytic; that stretch reads PHVKLMLEHE…MQEGKKPMLP (300 aa). The Zn(2+) site is built by Cys-298, His-350, and His-474.

Belongs to the class-II aminoacyl-tRNA synthetase family. Homodimer. Requires Zn(2+) as cofactor.

Its subcellular location is the cytoplasm. The enzyme catalyses tRNA(Thr) + L-threonine + ATP = L-threonyl-tRNA(Thr) + AMP + diphosphate + H(+). In terms of biological role, catalyzes the attachment of threonine to tRNA(Thr) in a two-step reaction: L-threonine is first activated by ATP to form Thr-AMP and then transferred to the acceptor end of tRNA(Thr). Also edits incorrectly charged L-seryl-tRNA(Thr). This is Threonine--tRNA ligase from Pyrococcus horikoshii (strain ATCC 700860 / DSM 12428 / JCM 9974 / NBRC 100139 / OT-3).